Consider the following 485-residue polypeptide: Calcium-dependent protein kinase 27 (485 aa).

Gly2 carries N-myristoyl glycine lipidation. The 263-residue stretch at 28–290 (YILGEELGRG…AAEVLGHPWM (263 aa)) folds into the Protein kinase domain. ATP-binding positions include 34–42 (LGRGNFGLT) and Lys57. Asp156 serves as the catalytic Proton acceptor. Residue Ser196 is modified to Phosphoserine. An autoinhibitory domain region spans residues 295 to 325 (ASDKPIDGVVLSRLKRFRDANKFKKVVLKFI). EF-hand domains lie at 332–367 (EEIKGLKTLFTNIDTDKSGNITLEELKTGLTRLGSN), 368–403 (LSKTEVEQLMEAADMDGNGTIDIDEFISATMHRYKL), 404–439 (DRDEHVYKAFQHFDKDNDGHITKEELEMAMKEDGAG), and 444–474 (IKQIIADADTDNDGKINFEEFRTMMRTESSL). Ca(2+) is bound by residues Asp345, Asp347, Ser349, Asn351, Glu356, Asp381, Asp383, Asn385, Thr387, Glu392, Asp417, Asp419, Asp421, His423, Glu428, Asp452, Asp454, Asp456, Lys458, and Glu463.

The protein belongs to the protein kinase superfamily. Ser/Thr protein kinase family. CDPK subfamily.

The protein resides in the membrane. It carries out the reaction L-seryl-[protein] + ATP = O-phospho-L-seryl-[protein] + ADP + H(+). The enzyme catalyses L-threonyl-[protein] + ATP = O-phospho-L-threonyl-[protein] + ADP + H(+). Its activity is regulated as follows. Activated by calcium. Autophosphorylation may play an important role in the regulation of the kinase activity. May play a role in signal transduction pathways that involve calcium as a second messenger. In Arabidopsis thaliana (Mouse-ear cress), this protein is Calcium-dependent protein kinase 27 (CPK27).